Consider the following 369-residue polypeptide: Chromatin modification-related protein EAF3 (369 aa).

In terms of domain architecture, Tudor-knot spans 9-97 (TVYAYHGPLI…WDEWVGIDRI (89 aa)). 2 disordered regions span residues 43-66 (PLEE…IAKF) and 126-191 (IIVN…NKSK). Positions 53–62 (NHHHHHHSQH) are enriched in basic residues. Residues 126–135 (IIVNATTKNH) are compositionally biased toward low complexity. Positions 136-149 (TNNKNKKESNKRKS) are enriched in basic residues. A compositionally biased stretch (low complexity) spans 150–191 (SSATTTSGVTAGTNNNKKQKSASTSTTNNTSGNSGTTSNKSK). The region spanning 193–368 (ILSRLNLNFP…TSPQYDSLAR (176 aa)) is the MRG domain.

Belongs to the MRG family. In terms of assembly, component of the NuA4 histone acetyltransferase complex.

The protein resides in the nucleus. Involved in deacetylation of histones, chromatin assembly and chromosome segregation. May act as a transcriptional oscillator, directing histone deacetylases to specific chromosomal domains. Component of the NuA4 histone acetyltransferase complex which is involved in transcriptional activation of selected genes principally by acetylation of nucleosomal histone H4 and H2A. The NuA4 complex is also involved in DNA repair. In Candida albicans (strain SC5314 / ATCC MYA-2876) (Yeast), this protein is Chromatin modification-related protein EAF3 (EAF3).